The sequence spans 209 residues: Ribosomal RNA large subunit methyltransferase E (209 aa).

Residues Gly63, Trp65, Asp83, Asp99, and Asp124 each coordinate S-adenosyl-L-methionine. Lys164 (proton acceptor) is an active-site residue.

The protein belongs to the class I-like SAM-binding methyltransferase superfamily. RNA methyltransferase RlmE family.

Its subcellular location is the cytoplasm. The enzyme catalyses uridine(2552) in 23S rRNA + S-adenosyl-L-methionine = 2'-O-methyluridine(2552) in 23S rRNA + S-adenosyl-L-homocysteine + H(+). Functionally, specifically methylates the uridine in position 2552 of 23S rRNA at the 2'-O position of the ribose in the fully assembled 50S ribosomal subunit. This is Ribosomal RNA large subunit methyltransferase E from Yersinia pseudotuberculosis serotype O:1b (strain IP 31758).